A 163-amino-acid polypeptide reads, in one-letter code: Beta-lactoglobulin-2 (163 aa).

Cystine bridges form between Cys-66–Cys-161 and Cys-106–Cys-120.

It belongs to the calycin superfamily. Lipocalin family. As to quaternary structure, monomer.

It is found in the secreted. Functionally, lactoglobulin is the primary component of whey, it binds retinol and is probably involved in the transport of that molecule. The sequence is that of Beta-lactoglobulin-2 (LGB2) from Equus asinus (Donkey).